A 417-amino-acid polypeptide reads, in one-letter code: Tyrosine--tRNA ligase (417 aa).

Residue Y34 participates in L-tyrosine binding. A 'HIGH' region motif is present at residues 39–48 (PTAKSIHIGN). 2 residues coordinate L-tyrosine: Y165 and Q169. Residues 227–231 (KFGKS) carry the 'KMSKS' region motif. K230 lines the ATP pocket. An S4 RNA-binding domain is found at 349-416 (TDVVELLVKD…GKKKYFLAKV (68 aa)).

This sequence belongs to the class-I aminoacyl-tRNA synthetase family. TyrS type 1 subfamily. As to quaternary structure, homodimer.

It localises to the cytoplasm. It catalyses the reaction tRNA(Tyr) + L-tyrosine + ATP = L-tyrosyl-tRNA(Tyr) + AMP + diphosphate + H(+). Catalyzes the attachment of tyrosine to tRNA(Tyr) in a two-step reaction: tyrosine is first activated by ATP to form Tyr-AMP and then transferred to the acceptor end of tRNA(Tyr). The sequence is that of Tyrosine--tRNA ligase from Oenococcus oeni (strain ATCC BAA-331 / PSU-1).